Reading from the N-terminus, the 182-residue chain is Flavodoxin (182 aa).

In terms of domain architecture, Flavodoxin-like spans 4–173 (IGLFFGSDTG…RLKGWLSLIA (170 aa)).

The protein belongs to the flavodoxin family. Requires FMN as cofactor.

Low-potential electron donor to a number of redox enzymes. NifF is the electron donor to nitrogenase. The sequence is that of Flavodoxin (nifF) from Rhodobacter capsulatus (strain ATCC BAA-309 / NBRC 16581 / SB1003).